The chain runs to 346 residues: RNA polymerase II holoenzyme cyclin-like subunit (346 aa).

One can recognise a Cyclin N-terminal domain in the interval 59-158 (NLLIKLGRRL…EMDSYLFLHH (100 aa)).

It belongs to the cyclin family. Cyclin C subfamily. As to quaternary structure, component of the SRB8-11 complex, a regulatory module of the Mediator complex.

The protein localises to the nucleus. Its function is as follows. Component of the SRB8-11 complex. The SRB8-11 complex is a regulatory module of the Mediator complex which is itself involved in regulation of basal and activated RNA polymerase II-dependent transcription. The SRB8-11 complex may be involved in the transcriptional repression of a subset of genes regulated by Mediator. It may inhibit the association of the Mediator complex with RNA polymerase II to form the holoenzyme complex. The SRB8-11 complex phosphorylates the C-terminal domain (CTD) of the largest subunit of RNA polymerase II. This chain is RNA polymerase II holoenzyme cyclin-like subunit (SSN8), found in Scheffersomyces stipitis (strain ATCC 58785 / CBS 6054 / NBRC 10063 / NRRL Y-11545) (Yeast).